Here is a 442-residue protein sequence, read N- to C-terminus: Putative arsenical pump membrane protein (442 aa).

Transmembrane regions (helical) follow at residues 22 to 42 (IPAT…LADL), 56 to 76 (ILAT…YWVA), 85 to 105 (GSGI…TIFL), 107 to 127 (NDGS…YLGL), 136 to 156 (LLSG…SNIV), 174 to 194 (MMFV…FMFF), 250 to 270 (LFAA…GSFI), 294 to 314 (IFIF…IGFT), 328 to 347 (SLAH…SNLF), 378 to 398 (IIGS…TLIW), and 419 to 439 (IIII…WISW).

Belongs to the ArsB family.

It localises to the cell membrane. This is Putative arsenical pump membrane protein (ywrK) from Bacillus subtilis (strain 168).